A 606-amino-acid polypeptide reads, in one-letter code: DNA mismatch repair protein MutL (606 aa).

The segment at methionine 340–proline 366 is disordered. Residues arginine 353–proline 366 are compositionally biased toward low complexity.

The protein belongs to the DNA mismatch repair MutL/HexB family.

Functionally, this protein is involved in the repair of mismatches in DNA. It is required for dam-dependent methyl-directed DNA mismatch repair. May act as a 'molecular matchmaker', a protein that promotes the formation of a stable complex between two or more DNA-binding proteins in an ATP-dependent manner without itself being part of a final effector complex. The protein is DNA mismatch repair protein MutL of Agrobacterium fabrum (strain C58 / ATCC 33970) (Agrobacterium tumefaciens (strain C58)).